Reading from the N-terminus, the 450-residue chain is Phosphoglucosamine mutase (450 aa).

Catalysis depends on Ser-101, which acts as the Phosphoserine intermediate. Mg(2+)-binding residues include Ser-101, Asp-240, Asp-242, and Asp-244. Position 101 is a phosphoserine (Ser-101).

The protein belongs to the phosphohexose mutase family. Mg(2+) serves as cofactor. Post-translationally, activated by phosphorylation.

It catalyses the reaction alpha-D-glucosamine 1-phosphate = D-glucosamine 6-phosphate. Catalyzes the conversion of glucosamine-6-phosphate to glucosamine-1-phosphate. This Streptococcus equi subsp. zooepidemicus (strain MGCS10565) protein is Phosphoglucosamine mutase.